The sequence spans 121 residues: Large ribosomal subunit protein uL18c (121 aa).

Belongs to the universal ribosomal protein uL18 family. As to quaternary structure, part of the 50S ribosomal subunit; contacts the 5S rRNA.

The protein resides in the plastid. Its subcellular location is the cyanelle. Its function is as follows. Binds 5S rRNA, forms part of the central protuberance of the 50S subunit. The polypeptide is Large ribosomal subunit protein uL18c (rpl18) (Cyanophora paradoxa).